The sequence spans 238 residues: UDP-2,3-diacylglucosamine hydrolase (238 aa).

5 residues coordinate Mn(2+): Asp8, His10, Asp41, Asn78, and His113. 78 to 79 contributes to the substrate binding site; it reads NR. Substrate is bound by residues Asp121, Ser159, Asn163, Lys166, and His194. Positions 194 and 196 each coordinate Mn(2+).

This sequence belongs to the LpxH family. Mn(2+) serves as cofactor.

It localises to the cell inner membrane. It carries out the reaction UDP-2-N,3-O-bis[(3R)-3-hydroxytetradecanoyl]-alpha-D-glucosamine + H2O = 2-N,3-O-bis[(3R)-3-hydroxytetradecanoyl]-alpha-D-glucosaminyl 1-phosphate + UMP + 2 H(+). It participates in glycolipid biosynthesis; lipid IV(A) biosynthesis; lipid IV(A) from (3R)-3-hydroxytetradecanoyl-[acyl-carrier-protein] and UDP-N-acetyl-alpha-D-glucosamine: step 4/6. In terms of biological role, hydrolyzes the pyrophosphate bond of UDP-2,3-diacylglucosamine to yield 2,3-diacylglucosamine 1-phosphate (lipid X) and UMP by catalyzing the attack of water at the alpha-P atom. Involved in the biosynthesis of lipid A, a phosphorylated glycolipid that anchors the lipopolysaccharide to the outer membrane of the cell. This is UDP-2,3-diacylglucosamine hydrolase from Shewanella halifaxensis (strain HAW-EB4).